The sequence spans 366 residues: Ribosomal RNA small subunit methyltransferase H 1 (366 aa).

Positions Met1–Arg46 are disordered. Over residues His25–Lys37 the composition is skewed to basic residues. S-adenosyl-L-methionine-binding positions include Gly97 to His99, Asp117, Phe147, Asp166, and Gln173.

This sequence belongs to the methyltransferase superfamily. RsmH family.

The protein resides in the cytoplasm. It catalyses the reaction cytidine(1402) in 16S rRNA + S-adenosyl-L-methionine = N(4)-methylcytidine(1402) in 16S rRNA + S-adenosyl-L-homocysteine + H(+). Its function is as follows. Specifically methylates the N4 position of cytidine in position 1402 (C1402) of 16S rRNA. This is Ribosomal RNA small subunit methyltransferase H 1 from Lachnoclostridium phytofermentans (strain ATCC 700394 / DSM 18823 / ISDg) (Clostridium phytofermentans).